The chain runs to 22 residues: leu leader peptide (22 aa).

Residues 1–22 (MLHHMTSRANLLLLRRGGSQRS) form a disordered region. Residues 11 to 22 (LLLLRRGGSQRS) are compositionally biased toward low complexity.

Functionally, involved in control of the biosynthesis of leucine. The sequence is that of leu leader peptide (leuL) from Corynebacterium glutamicum (strain ATCC 13032 / DSM 20300 / JCM 1318 / BCRC 11384 / CCUG 27702 / LMG 3730 / NBRC 12168 / NCIMB 10025 / NRRL B-2784 / 534).